The chain runs to 422 residues: Serine--tRNA ligase (422 aa).

Position 229–231 (229–231 (TAE)) interacts with L-serine. 260 to 262 (RKE) contacts ATP. Glu283 contacts L-serine. 347–350 (EISS) provides a ligand contact to ATP. Ser383 serves as a coordination point for L-serine.

Belongs to the class-II aminoacyl-tRNA synthetase family. Type-1 seryl-tRNA synthetase subfamily. As to quaternary structure, homodimer. The tRNA molecule binds across the dimer.

Its subcellular location is the cytoplasm. It carries out the reaction tRNA(Ser) + L-serine + ATP = L-seryl-tRNA(Ser) + AMP + diphosphate + H(+). The enzyme catalyses tRNA(Sec) + L-serine + ATP = L-seryl-tRNA(Sec) + AMP + diphosphate + H(+). Its pathway is aminoacyl-tRNA biosynthesis; selenocysteinyl-tRNA(Sec) biosynthesis; L-seryl-tRNA(Sec) from L-serine and tRNA(Sec): step 1/1. In terms of biological role, catalyzes the attachment of serine to tRNA(Ser). Is also able to aminoacylate tRNA(Sec) with serine, to form the misacylated tRNA L-seryl-tRNA(Sec), which will be further converted into selenocysteinyl-tRNA(Sec). The chain is Serine--tRNA ligase from Citrifermentans bemidjiense (strain ATCC BAA-1014 / DSM 16622 / JCM 12645 / Bem) (Geobacter bemidjiensis).